An 826-amino-acid polypeptide reads, in one-letter code: Disintegrin and metalloproteinase domain-containing protein 8 (826 aa).

A signal peptide spans 1-16 (MLGLWLLSVLWTPAVA). Residues 17-658 (PGPPLPHVKQ…VSDEQAASTS (642 aa)) are Extracellular-facing. N-linked (GlcNAc...) asparagine glycans are attached at residues N89 and N260. A Peptidase M12B domain is found at 196 to 395 (RYVELYVVAD…PQTGCLTNVP (200 aa)). Cystine bridges form between C305–C390, C346–C374, C348–C357, C430–C452, C443–C449, C461–C481, C468–C498, C493–C503, C563–C615, C615–C625, C619–C631, and C633–C642. H329 contributes to the Zn(2+) binding site. E330 is an active-site residue. Positions 333 and 339 each coordinate Zn(2+). In terms of domain architecture, Disintegrin spans 403–489 (GPVCGNLFVE…TCPEDAFQQN (87 aa)). An N-linked (GlcNAc...) asparagine glycan is attached at N431. The EGF-like domain maps to 611 to 643 (RSENCSAKCNNHGVCNHKRECHCHKGWAPPNCV). N-linked (GlcNAc...) asparagine glycosylation occurs at N614. A helical transmembrane segment spans residues 659–683 (LPVSVVVVLVILVAAMVIVAGIVIY). Residues 684–826 (RKAPRQIQRR…VALKVPIQKR (143 aa)) lie on the Cytoplasmic side of the membrane. A disordered region spans residues 701–826 (SGLSNPLFYT…VALKVPIQKR (126 aa)). Residues 733–748 (PPRPIVKPKRPPPAPP) show a composition bias toward pro residues. Low complexity predominate over residues 749–763 (GAVSSSPLPVPVYAP).

As to quaternary structure, interacts with FST3. Zn(2+) is required as a cofactor. In terms of tissue distribution, macrophages.

It localises to the membrane. Possible involvement in extravasation of leukocytes. This chain is Disintegrin and metalloproteinase domain-containing protein 8 (Adam8), found in Mus musculus (Mouse).